A 384-amino-acid chain; its full sequence is Zinc transporter 7 (384 aa).

The signal sequence occupies residues Met-1–Ala-25. Residues Glu-26–Lys-46 lie on the Extracellular side of the membrane. The chain crosses the membrane as a helical span at residues Gly-47 to Gly-67. Topologically, residues Arg-68–Ala-79 are cytoplasmic. Residues Phe-80–Leu-100 traverse the membrane as a helical segment. Over His-101–Ser-119 the chain is Extracellular. The chain crosses the membrane as a helical span at residues Phe-120–Leu-140. Residues Ala-141–Arg-227 lie on the Cytoplasmic side of the membrane. The tract at residues Asp-185–Val-222 is disordered. Basic residues predominate over residues Ser-195 to Gly-205. Residues Ser-228 to Leu-248 form a helical membrane-spanning segment. At Ser-249 to Pro-261 the chain is on the extracellular side. A helical transmembrane segment spans residues Leu-262 to Ala-282. Topologically, residues Gln-283–Ala-291 are cytoplasmic. The helical transmembrane segment at Ala-292 to Val-312 threads the bilayer. The Extracellular portion of the chain corresponds to Ala-313–Ala-323. The chain crosses the membrane as a helical span at residues Leu-324 to Val-344. Residues Asp-345–Gln-363 lie on the Cytoplasmic side of the membrane. A helical transmembrane segment spans residues Val-364–Ala-384.

Belongs to the ZIP transporter (TC 2.A.5) family.

It is found in the cell membrane. Its function is as follows. Zinc transporter that may be involved in zinc uptake from the rhizosphere. This chain is Zinc transporter 7 (ZIP7), found in Oryza sativa subsp. japonica (Rice).